A 373-amino-acid chain; its full sequence is Inhibitor of nuclear factor kappa-B kinase-interacting protein (373 aa).

Residues 1-11 (MSEVKSRKKPG) are compositionally biased toward basic residues. A disordered region spans residues 1–38 (MSEVKSRKKPGPKVAAPEPEKRSDGRKNPEARGGAGWA). A compositionally biased stretch (basic and acidic residues) spans 18-30 (EPEKRSDGRKNPE). A helical membrane pass occupies residues 43-59 (GLSLLSLATSLGLAWLV). 2 coiled-coil regions span residues 64-257 (EKFA…DKLS) and 290-325 (TERK…LEGI). Asparagine 151 carries an N-linked (GlcNAc...) asparagine glycan.

N-glycosylated at Asn-151.

The protein resides in the endoplasmic reticulum membrane. Its function is as follows. Target of p53/TP53 with pro-apoptotic function. The chain is Inhibitor of nuclear factor kappa-B kinase-interacting protein (Ikbip) from Rattus norvegicus (Rat).